Consider the following 182-residue polypeptide: Transmembrane and coiled-coil domain-containing protein 2 (182 aa).

Residues 51 to 71 traverse the membrane as a helical segment; the sequence is VQIILRISFLILLGIGIYALW. Residues 124–151 are a coiled coil; the sequence is GLQEKILKKLKTVENKMKNLEGIIVAQK.

The protein resides in the membrane. This is Transmembrane and coiled-coil domain-containing protein 2 (TMCO2) from Homo sapiens (Human).